The primary structure comprises 337 residues: Probable cytosolic iron-sulfur protein assembly protein Ciao1 (337 aa).

WD repeat units lie at residues 12–51 (GHRG…RWVA), 58–97 (GHSR…FECN), 102–141 (GHEN…EYEC), 147–186 (THTQ…SDWS), 193–232 (SHES…NEFG), 251–290 (YHSR…SPHE), and 301–337 (AHSQ…EPEE).

Belongs to the WD repeat CIA1 family.

Functionally, essential component of the cytosolic iron-sulfur (Fe/S) protein assembly machinery. Required for the maturation of extramitochondrial Fe/S proteins. This is Probable cytosolic iron-sulfur protein assembly protein Ciao1 from Aedes aegypti (Yellowfever mosquito).